The chain runs to 550 residues: Acetyl-coenzyme A transporter 1 (550 aa).

Basic and acidic residues-rich tracts occupy residues 1-12 (MSPTISHKDSSR) and 36-52 (DDSR…REVL). Positions 1 to 58 (MSPTISHKDSSRQRRSGMFSHALDMKSGPLPPGGWDDSRRDSVGGEGDREVLLGDAGP) are disordered. At 1-74 (MSPTISHKDS…PRSYRSELSS (74 aa)) the chain is on the cytoplasmic side. The residue at position 42 (S42) is a Phosphoserine. The helical transmembrane segment at 75–95 (ILLLLFLYVLQGIPLGLAGSI) threads the bilayer. Residues 96–113 (PLILQSKNVSYTDQAFFS) are Extracellular-facing. An N-linked (GlcNAc...) asparagine glycan is attached at N103. Residues 114–134 (FVFWPFSLKLLWAPLVDAVYF) traverse the membrane as a helical segment. At 135-141 (KNFGRRK) the chain is on the cytoplasmic side. A helical membrane pass occupies residues 142–162 (SWLVPTQYTLGIFMIYLSTQV). Topologically, residues 163–175 (DRLLGNIDGRTPD) are extracellular. A helical transmembrane segment spans residues 176–196 (VVALTVTFFLFEFLAATQDIA). The Cytoplasmic portion of the chain corresponds to 197 to 217 (VDGWALTMLSRENVGYASTCN). A helical membrane pass occupies residues 218–238 (SVGQTAGYFLGNVLFLALESA). At 239-256 (DFCNKYLRFQPQPRGIVT) the chain is on the extracellular side. A helical transmembrane segment spans residues 257-277 (LSDFLFFWGTVFLITTTLVAL). The Cytoplasmic segment spans residues 278–300 (LKKENREASIVKEETQGITDTYK). A helical transmembrane segment spans residues 301 to 321 (LLFSIIKMPAVLAFCLLILTS). Topologically, residues 322–344 (KIGFSAADAVTGLKLVEEGVPKE) are extracellular. A helical transmembrane segment spans residues 345 to 365 (HLALLAVPMVPLQIILPLLIS). Topologically, residues 366–375 (KYTAGPQPLN) are cytoplasmic. A helical membrane pass occupies residues 376–396 (IFYKAMPYRLLLGLEYALLVW). At 397–405 (WTPKVEHQG) the chain is on the extracellular side. A helical transmembrane segment spans residues 406 to 426 (GFPLYYYIIVLLSYALHQVTL). The Cytoplasmic portion of the chain corresponds to 427–509 (YSMYVSIMAF…LGGSCVTALD (83 aa)). The chain crosses the membrane as a helical span at residues 510–530 (GYYVESIICVLIGFGWWFFLG). The Extracellular portion of the chain corresponds to 531–550 (PKFKKLQDEGPSSWKCKRNN).

The protein belongs to the SLC33A transporter family. Homodimerizes. As to expression, expressed in all adult tissues examined including brain, heart, kidney, liver and spleen, with maximum expression in liver and kidney.

Its subcellular location is the endoplasmic reticulum membrane. The catalysed reaction is acetyl-CoA(in) = acetyl-CoA(out). Its function is as follows. Acetyl-CoA transporter that mediates active acetyl-CoA import through the endoplasmic reticulum (ER) membrane into the ER lumen where specific ER-based acetyl-CoA:lysine acetyltransferases are responsible for the acetylation of ER-based protein substrate, such as BACE1. Necessary for O-acetylation of gangliosides. This Mus musculus (Mouse) protein is Acetyl-coenzyme A transporter 1 (Slc33a1).